The primary structure comprises 962 residues: Glycine dehydrogenase (decarboxylating) (962 aa).

At K709 the chain carries N6-(pyridoxal phosphate)lysine.

It belongs to the GcvP family. As to quaternary structure, the glycine cleavage system is composed of four proteins: P, T, L and H. Pyridoxal 5'-phosphate serves as cofactor.

It carries out the reaction N(6)-[(R)-lipoyl]-L-lysyl-[glycine-cleavage complex H protein] + glycine + H(+) = N(6)-[(R)-S(8)-aminomethyldihydrolipoyl]-L-lysyl-[glycine-cleavage complex H protein] + CO2. Functionally, the glycine cleavage system catalyzes the degradation of glycine. The P protein binds the alpha-amino group of glycine through its pyridoxal phosphate cofactor; CO(2) is released and the remaining methylamine moiety is then transferred to the lipoamide cofactor of the H protein. The protein is Glycine dehydrogenase (decarboxylating) of Shewanella baltica (strain OS195).